We begin with the raw amino-acid sequence, 368 residues long: MRAEIENYVKKIEQSLELLWRSLDVEASTERLNALEELTADPSLWNDQANAQKLLREKSNLEEKLNAFNKLKSNLKDALELEEMAEAENDLETLSQIEQDLKNLSIIAAKFETECLFSGEADGNNCFLEINAGAGGTESHDWASIMMRMYLRFAERLGFKTEIINMINGEEAGIKSCTIRIIGKRAYGWFKTETGVHRLVRISPFNAAGKRMTSFASSWVYPEIDDNIAITIEDKDLRIDTFRASGAGGQHVNTTDSAVRITHIPTGTVTQCQSDRSQHKNKAQAMKMLQAKLYELEMQKRTDSVNEQNAAKTDNSWGHQIRSYVLQPYHMVKDLRTDYETSDTKGVLDGDLEEFVSAHLAMNVGGKK.

Residue Gln-250 is modified to N5-methylglutamine.

The protein belongs to the prokaryotic/mitochondrial release factor family. Post-translationally, methylated by PrmC. Methylation increases the termination efficiency of RF2.

It is found in the cytoplasm. Peptide chain release factor 2 directs the termination of translation in response to the peptide chain termination codons UGA and UAA. In Rickettsia conorii (strain ATCC VR-613 / Malish 7), this protein is Peptide chain release factor 2.